A 165-amino-acid polypeptide reads, in one-letter code: Heme oxygenase (165 aa).

It belongs to the heme oxygenase family.

It carries out the reaction heme b + 3 reduced [NADPH--hemoprotein reductase] + 3 O2 = biliverdin IXalpha + CO + Fe(2+) + 3 oxidized [NADPH--hemoprotein reductase] + 3 H2O + H(+). In terms of biological role, catalyzes the opening of the heme ring to form the open-chain tetrapyrrole biliverdin IX with the release of iron and carbon monoxide (CO). This Xanthomonas campestris pv. campestris (strain 8004) protein is Heme oxygenase (bphO).